We begin with the raw amino-acid sequence, 481 residues long: Hyaluronidase-4 (481 aa).

The Cytoplasmic segment spans residues 1–11 (MQLLPEGQLRL). The helical transmembrane segment at 12-32 (CVFQPVHLTSGLLILFILKSI) threads the bilayer. The Extracellular segment spans residues 33 to 455 (SSLKPARLPV…CREMTEASGP (423 aa)). Cystine bridges form between Cys-59–Cys-351, Cys-223–Cys-237, Cys-376–Cys-387, Cys-381–Cys-435, and Cys-437–Cys-446. N-linked (GlcNAc...) asparagine glycosylation is found at Asn-64 and Asn-115. Residue Glu-147 is the Proton donor of the active site. Asn-232 and Asn-343 each carry an N-linked (GlcNAc...) asparagine glycan. A helical membrane pass occupies residues 456-476 (SGLSLSSSSVITLCLLVLAGY). Residues 477–481 (QSIQL) are Cytoplasmic-facing.

This sequence belongs to the glycosyl hydrolase 56 family.

Its subcellular location is the membrane. The catalysed reaction is Random hydrolysis of (1-&gt;4)-linkages between N-acetyl-beta-D-glucosamine and D-glucuronate residues in hyaluronate.. Its function is as follows. Endo-hyaluronidase that degrades hyaluronan to smaller oligosaccharide fragments. Also has chondroitin sulfate hydrolase activity, The best substrate being the galactosaminidic linkage in the sequence of a trisulfated tetrasaccharide. The polypeptide is Hyaluronidase-4 (Hyal4) (Mus musculus (Mouse)).